The sequence spans 98 residues: NADH-ubiquinone oxidoreductase chain 4L (98 aa).

Helical transmembrane passes span 1–21 (MSMV…GLLM), 29–49 (SLLC…LTIL), and 61–81 (IILL…LVMV).

The protein belongs to the complex I subunit 4L family. As to quaternary structure, core subunit of respiratory chain NADH dehydrogenase (Complex I) which is composed of 45 different subunits.

It localises to the mitochondrion inner membrane. It carries out the reaction a ubiquinone + NADH + 5 H(+)(in) = a ubiquinol + NAD(+) + 4 H(+)(out). In terms of biological role, core subunit of the mitochondrial membrane respiratory chain NADH dehydrogenase (Complex I) which catalyzes electron transfer from NADH through the respiratory chain, using ubiquinone as an electron acceptor. Part of the enzyme membrane arm which is embedded in the lipid bilayer and involved in proton translocation. The sequence is that of NADH-ubiquinone oxidoreductase chain 4L (MT-ND4L) from Bos mutus grunniens (Wild yak).